Reading from the N-terminus, the 347-residue chain is MNPLIFTTIVLTIIMGTMIVMTSSHWLTVWIGFEMNMLAVIPILMKNYNPRSMEASTKYFLTQATASMLLMLAIIINLLYSGQWSITKPLNQTASIIMTLAMAMKLGLSPFHFWVPEVTQGIQLSSGLILLTWQKLAPMSILYQIFPTINLNLMLLMSVLSVAIGGWGGLNQTQLRKIMAYSSIAHMGWMTAIMAYNPTMTLLNLVIYILLTTTTFMMFMLNSSTTTLSLSHTWNKAPLLTMTILTIMLSMGGLPPLSGFLPKWMIIQEMVKNDNIITPTIMAVTALLNLYFYMRLTYSTSLTMFPSTNNMKMKWQLNNTKSTAHVSPLIILSTLALPLSPILMLLE.

11 helical membrane passes run 1 to 21, 25 to 45, 59 to 79, 96 to 116, 122 to 142, 145 to 165, 178 to 198, 201 to 221, 237 to 257, 276 to 296, and 326 to 346; these read MNPL…MIVM, HWLT…PILM, YFLT…INLL, IIMT…FWVP, IQLS…MSIL, IFPT…VAIG, IMAY…AYNP, TLLN…MFML, APLL…LPPL, IITP…YMRL, and VSPL…LMLL.

The protein belongs to the complex I subunit 2 family. Core subunit of respiratory chain NADH dehydrogenase (Complex I) which is composed of 45 different subunits. Interacts with TMEM242.

The protein resides in the mitochondrion inner membrane. It carries out the reaction a ubiquinone + NADH + 5 H(+)(in) = a ubiquinol + NAD(+) + 4 H(+)(out). Its function is as follows. Core subunit of the mitochondrial membrane respiratory chain NADH dehydrogenase (Complex I) which catalyzes electron transfer from NADH through the respiratory chain, using ubiquinone as an electron acceptor. Essential for the catalytic activity and assembly of complex I. The polypeptide is NADH-ubiquinone oxidoreductase chain 2 (Boneia bidens (Manado fruit bat)).